Reading from the N-terminus, the 193-residue chain is Ion-translocating oxidoreductase complex subunit A (193 aa).

A run of 6 helical transmembrane segments spans residues 5–25 (LLLLVSTVLINNFVLVKFLGL), 39–59 (VGMGLATTFVMTLASASSYLM), 63–83 (ILIPLNIAYLRTLAFILVIAV), 102–122 (LLGIFLPLITTNCAVLGVALL), 134–154 (IIYGFGAAAGFSLVLILFAAM), and 171–191 (SIAMVTAGLMSLAFMGFTGLI).

Belongs to the NqrDE/RnfAE family. The complex is composed of six subunits: RnfA, RnfB, RnfC, RnfD, RnfE and RnfG.

The protein resides in the cell inner membrane. Part of a membrane-bound complex that couples electron transfer with translocation of ions across the membrane. The polypeptide is Ion-translocating oxidoreductase complex subunit A (Aeromonas salmonicida (strain A449)).